The following is a 465-amino-acid chain: ATP synthase subunit beta (465 aa).

153–160 (GGAGVGKT) is a binding site for ATP.

Belongs to the ATPase alpha/beta chains family. As to quaternary structure, F-type ATPases have 2 components, CF(1) - the catalytic core - and CF(0) - the membrane proton channel. CF(1) has five subunits: alpha(3), beta(3), gamma(1), delta(1), epsilon(1). CF(0) has three main subunits: a(1), b(2) and c(9-12). The alpha and beta chains form an alternating ring which encloses part of the gamma chain. CF(1) is attached to CF(0) by a central stalk formed by the gamma and epsilon chains, while a peripheral stalk is formed by the delta and b chains.

It is found in the cell membrane. The enzyme catalyses ATP + H2O + 4 H(+)(in) = ADP + phosphate + 5 H(+)(out). Produces ATP from ADP in the presence of a proton gradient across the membrane. The catalytic sites are hosted primarily by the beta subunits. The chain is ATP synthase subunit beta from Clostridium perfringens (strain ATCC 13124 / DSM 756 / JCM 1290 / NCIMB 6125 / NCTC 8237 / Type A).